The primary structure comprises 268 residues: Small ribosomal subunit protein mS43 (268 aa).

The N-terminal 23 residues, methionine 1 to serine 23, are a transit peptide targeting the mitochondrion.

The protein belongs to the mitochondrion-specific ribosomal protein mS43 family. Component of the mitochondrial small ribosomal subunit (mt-SSU). Mature yeast 74S mitochondrial ribosomes consist of a small (37S) and a large (54S) subunit. The 37S small subunit contains a 15S ribosomal RNA (15S mt-rRNA) and at least 32 different proteins. The 54S large subunit contains a 21S rRNA (21S mt-rRNA) and at least 45 different proteins. mS43 forms a dimer with mS42, building a large protuberance adjacent to the mRNA channel exit in the mt-SSU body.

Its subcellular location is the mitochondrion. In terms of biological role, component of the mitochondrial ribosome (mitoribosome), a dedicated translation machinery responsible for the synthesis of mitochondrial genome-encoded proteins, including at least some of the essential transmembrane subunits of the mitochondrial respiratory chain. The mitoribosomes are attached to the mitochondrial inner membrane and translation products are cotranslationally integrated into the membrane. The chain is Small ribosomal subunit protein mS43 from Schizosaccharomyces pombe (strain 972 / ATCC 24843) (Fission yeast).